We begin with the raw amino-acid sequence, 605 residues long: UPF0313 protein GSU2873 (605 aa).

One can recognise a Radical SAM core domain in the interval 291–561; the sequence is AYEQIRASVT…LQKALLLWHL (271 aa). [4Fe-4S] cluster contacts are provided by Cys305, Cys309, and Cys312. The tract at residues 586–605 is disordered; that stretch reads GGAAGGGGGRSGSGFRPGRT. The span at 587-597 shows a compositional bias: gly residues; it reads GAAGGGGGRSG.

This sequence belongs to the UPF0313 family. Requires [4Fe-4S] cluster as cofactor.

The polypeptide is UPF0313 protein GSU2873 (Geobacter sulfurreducens (strain ATCC 51573 / DSM 12127 / PCA)).